Consider the following 212-residue polypeptide: ATP-dependent Clp protease proteolytic subunit (212 aa).

The active-site Nucleophile is the serine 114. Residue histidine 139 is part of the active site.

This sequence belongs to the peptidase S14 family. Fourteen ClpP subunits assemble into 2 heptameric rings which stack back to back to give a disk-like structure with a central cavity, resembling the structure of eukaryotic proteasomes.

It is found in the cytoplasm. The enzyme catalyses Hydrolysis of proteins to small peptides in the presence of ATP and magnesium. alpha-casein is the usual test substrate. In the absence of ATP, only oligopeptides shorter than five residues are hydrolyzed (such as succinyl-Leu-Tyr-|-NHMec, and Leu-Tyr-Leu-|-Tyr-Trp, in which cleavage of the -Tyr-|-Leu- and -Tyr-|-Trp bonds also occurs).. Functionally, cleaves peptides in various proteins in a process that requires ATP hydrolysis. Has a chymotrypsin-like activity. Plays a major role in the degradation of misfolded proteins. The polypeptide is ATP-dependent Clp protease proteolytic subunit (Laribacter hongkongensis (strain HLHK9)).